Reading from the N-terminus, the 227-residue chain is Cytochrome c oxidase subunit 2 (227 aa).

Over 1–14 (MAYPFQLGFQDATS) the chain is Mitochondrial intermembrane. Residues 15–45 (PIMEELLHFHDHTLMIVFLISSLVLYIISSM) traverse the membrane as a helical segment. The Mitochondrial matrix segment spans residues 46–59 (LTTKLTHTSTMDAQ). Residues 60–87 (EVETIWTILPAIILILIALPSLRILYMM) form a helical membrane-spanning segment. Residues 88 to 227 (DEINNPSLTV…HFEEWSASML (140 aa)) are Mitochondrial intermembrane-facing. Cu cation contacts are provided by histidine 161, cysteine 196, glutamate 198, cysteine 200, histidine 204, and methionine 207. Glutamate 198 is a Mg(2+) binding site.

The protein belongs to the cytochrome c oxidase subunit 2 family. In terms of assembly, component of the cytochrome c oxidase (complex IV, CIV), a multisubunit enzyme composed of 14 subunits. The complex is composed of a catalytic core of 3 subunits MT-CO1, MT-CO2 and MT-CO3, encoded in the mitochondrial DNA, and 11 supernumerary subunits COX4I, COX5A, COX5B, COX6A, COX6B, COX6C, COX7A, COX7B, COX7C, COX8 and NDUFA4, which are encoded in the nuclear genome. The complex exists as a monomer or a dimer and forms supercomplexes (SCs) in the inner mitochondrial membrane with NADH-ubiquinone oxidoreductase (complex I, CI) and ubiquinol-cytochrome c oxidoreductase (cytochrome b-c1 complex, complex III, CIII), resulting in different assemblies (supercomplex SCI(1)III(2)IV(1) and megacomplex MCI(2)III(2)IV(2)). Found in a complex with TMEM177, COA6, COX18, COX20, SCO1 and SCO2. Interacts with TMEM177 in a COX20-dependent manner. Interacts with COX20. Interacts with COX16. Cu cation serves as cofactor.

The protein resides in the mitochondrion inner membrane. The enzyme catalyses 4 Fe(II)-[cytochrome c] + O2 + 8 H(+)(in) = 4 Fe(III)-[cytochrome c] + 2 H2O + 4 H(+)(out). Functionally, component of the cytochrome c oxidase, the last enzyme in the mitochondrial electron transport chain which drives oxidative phosphorylation. The respiratory chain contains 3 multisubunit complexes succinate dehydrogenase (complex II, CII), ubiquinol-cytochrome c oxidoreductase (cytochrome b-c1 complex, complex III, CIII) and cytochrome c oxidase (complex IV, CIV), that cooperate to transfer electrons derived from NADH and succinate to molecular oxygen, creating an electrochemical gradient over the inner membrane that drives transmembrane transport and the ATP synthase. Cytochrome c oxidase is the component of the respiratory chain that catalyzes the reduction of oxygen to water. Electrons originating from reduced cytochrome c in the intermembrane space (IMS) are transferred via the dinuclear copper A center (CU(A)) of subunit 2 and heme A of subunit 1 to the active site in subunit 1, a binuclear center (BNC) formed by heme A3 and copper B (CU(B)). The BNC reduces molecular oxygen to 2 water molecules using 4 electrons from cytochrome c in the IMS and 4 protons from the mitochondrial matrix. The polypeptide is Cytochrome c oxidase subunit 2 (MT-CO2) (Equus caballus (Horse)).